Consider the following 457-residue polypeptide: Elongation factor 1-alpha (457 aa).

Position 2 is a n,N,N-trimethylglycine (glycine 2). Lysine 3 carries the post-translational modification N6,N6-dimethyllysine; alternate. At lysine 3 the chain carries N6-methyllysine; alternate. The 236-residue stretch at 5–240 (KTHVNVVVIG…DAIEPPVRPS (236 aa)) folds into the tr-type G domain. The G1 stretch occupies residues 14-21 (GHVDSGKS). A GTP-binding site is contributed by 14 to 21 (GHVDSGKS). N6-methyllysine is present on lysine 30. The tract at residues 70 to 74 (GITID) is G2. Lysine 79 carries the post-translational modification N6,N6,N6-trimethyllysine. The segment at 91 to 94 (DAPG) is G3. Residues 91-95 (DAPGH) and 153-156 (NKMD) contribute to the GTP site. A G4 region spans residues 153 to 156 (NKMD). The interval 192-194 (SGW) is G5. Lysine 316 is subject to N6,N6-dimethyllysine; alternate. Lysine 316 bears the N6-methyllysine; alternate mark. An N6-methyllysine modification is found at lysine 389.

Belongs to the TRAFAC class translation factor GTPase superfamily. Classic translation factor GTPase family. EF-Tu/EF-1A subfamily.

Its subcellular location is the cytoplasm. This protein promotes the GTP-dependent binding of aminoacyl-tRNA to the A-site of ribosomes during protein biosynthesis. The polypeptide is Elongation factor 1-alpha (TEF-3) (Mucor circinelloides f. lusitanicus (Mucor racemosus var. lusitanicus)).